We begin with the raw amino-acid sequence, 593 residues long: Insulin-like growth factor 2 mRNA-binding protein 3-B (593 aa).

RRM domains follow at residues 2-75 (NKLY…HSVP) and 81-156 (RKLQ…YIPD). Positions 159 to 208 (ATPQSPSQQLQQPQQQHPQGRRGFGQRGPARQGSPGAAARPKPQSEVPLR) are disordered. A compositionally biased stretch (low complexity) spans 161–176 (PQSPSQQLQQPQQQHP). 2 KH domains span residues 204–269 (EVPL…CKII) and 285–352 (EIPL…EEEV). A compositionally biased stretch (low complexity) spans 390–402 (SGMPPPSAGVSSP). The disordered stretch occupies residues 390 to 412 (SGMPPPSAGVSSPTTSASYPPFG). 2 consecutive KH domains span residues 417 to 482 (SETV…QGRI) and 499 to 565 (KLEA…QRKI). The interval 571–593 (QVRRQQQQQQKTAQSGQPQPRRK) is disordered.

This sequence belongs to the RRM IMP/VICKZ family. Homodimer and multimer. Associates with microtubules. Interaction with a translocation machinery protein TRAPA of the endoplasmic reticulum. Component of a mRNP complex, at least composed of DAZAP1, IGF2BP3, STAU and VgRBP60. The mRNP complex with DAZAP1, IGF2BP3, STAU and VgRBP60 is only found in the cytoplasm. Interacts with a hnRNP 1 related RNA transport protein VgRBP60 both in the nucleus (in an RNA-independent manner) and the cytoplasm (in an RNA-dependent manner). Found in a B3 activator complex. Expressed in oocytes, kidney and pancreas (at protein level). Expressed in oocytes, kidney and pancreas.

It localises to the nucleus. It is found in the cytoplasm. The protein localises to the endoplasmic reticulum. Functionally, RNA-binding protein that acts as a regulator of mRNA transport and localization. Binds to the RNA sequence motif 5'-UUCAC-3'. Preferentially binds to N6-methyladenosine (m6A)-containing mRNAs and increases their stability. Mediates the specific association of Vg1 RNA to microtubules. May regulate mRNA translation. Binds specifically to the vegetal localization elements (VLE or VgLE) in the 3'-UTR of Vg1 and VegT mRNAs. Binds to the Vg1 and VegT mRNAs in both the nucleus and the cytoplasm. May regulate mRNA translation. Acts as a transcription regulator. Binds to the 5'-[TA]GGTTACT-3' motif within element 3 of the TFIIIA gene promoter. The sequence is that of Insulin-like growth factor 2 mRNA-binding protein 3-B (igf2bp3-b) from Xenopus laevis (African clawed frog).